Consider the following 453-residue polypeptide: Keratin, type I cytoskeletal 15 (453 aa).

The head stretch occupies residues 1–102 (MATTLLQTSS…GGDGGLLSGN (102 aa)). A phosphoserine mark is found at S16, S17, S34, S48, and S56. The tract at residues 103-138 (EKITMQNLNDRLASYLEKVRALEEANADLEVKIRDW) is coil 1A. The 313-residue stretch at 103–415 (EKITMQNLND…SLLEGQDARM (313 aa)) folds into the IF rod domain. Positions 139-157 (YQRQSPTSPERDYSPYFKT) are linker 1. The segment at 158–249 (TDELRDKILA…KNHEEEMKEF (92 aa)) is coil 1B. A linker 12 region spans residues 250–269 (SNQLAGQVNVEMDAAPGVDL). The coil 2 stretch occupies residues 270 to 411 (TRVLSEMREQ…ATYHSLLEGQ (142 aa)). Residue K298 forms a Glycyl lysine isopeptide (Lys-Gly) (interchain with G-Cter in SUMO2) linkage. 2 positions are modified to phosphothreonine: T299 and T321. The tail stretch occupies residues 412–453 (DARMAGIGTGEASLGGGGGGKVRINVEESVDGKVVSSRKREI). Residue K444 forms a Glycyl lysine isopeptide (Lys-Gly) (interchain with G-Cter in SUMO1); alternate linkage. A Glycyl lysine isopeptide (Lys-Gly) (interchain with G-Cter in SUMO2); alternate cross-link involves residue K444.

Belongs to the intermediate filament family. Heterotetramer of two type I and two type II keratins. Interacts with NOD2. Expressed in the basal cell layers of several stratified epithelia including esophagus, tongue, stomach, epidermis and hair follicle. In the hair follicle, expression is detected mainly in the basal layer of the outer root sheath (ORS), except just above the follicle bulb where it occurs throughout its thickness. Low expression levels are seen in the single layer of ORS cells around the base of the follicle which increases in the palisade-like cells of the bulb. Also expressed in the basal cells of the sebaceous glands, and expression in the epidermis occurs in a punctate pattern.

The polypeptide is Keratin, type I cytoskeletal 15 (Ovis aries (Sheep)).